The sequence spans 120 residues: UPF0231 protein YacL (120 aa).

It belongs to the UPF0231 family.

This Escherichia coli (strain SMS-3-5 / SECEC) protein is UPF0231 protein YacL.